Consider the following 227-residue polypeptide: Cytochrome c oxidase subunit 2 (227 aa).

At 1-14 (MAHPLQLGLQDASS) the chain is on the mitochondrial intermembrane side. A helical transmembrane segment spans residues 15–45 (PIMEELLYFHDHALMIVFLISSLVLYTISLM). The Mitochondrial matrix portion of the chain corresponds to 46–59 (LTTKLMHTSTMNAQ). Residues 60–87 (MVETMWTILPAVILTSIALPSLRILYMT) traverse the membrane as a helical segment. Residues 88-227 (DEINNPLLTI…HFETWSTLTS (140 aa)) lie on the Mitochondrial intermembrane side of the membrane. The Cu cation site is built by histidine 161, cysteine 196, glutamate 198, cysteine 200, histidine 204, and methionine 207. Glutamate 198 is a binding site for Mg(2+).

Belongs to the cytochrome c oxidase subunit 2 family. Component of the cytochrome c oxidase (complex IV, CIV), a multisubunit enzyme composed of 14 subunits. The complex is composed of a catalytic core of 3 subunits MT-CO1, MT-CO2 and MT-CO3, encoded in the mitochondrial DNA, and 11 supernumerary subunits COX4I, COX5A, COX5B, COX6A, COX6B, COX6C, COX7A, COX7B, COX7C, COX8 and NDUFA4, which are encoded in the nuclear genome. The complex exists as a monomer or a dimer and forms supercomplexes (SCs) in the inner mitochondrial membrane with NADH-ubiquinone oxidoreductase (complex I, CI) and ubiquinol-cytochrome c oxidoreductase (cytochrome b-c1 complex, complex III, CIII), resulting in different assemblies (supercomplex SCI(1)III(2)IV(1) and megacomplex MCI(2)III(2)IV(2)). Found in a complex with TMEM177, COA6, COX18, COX20, SCO1 and SCO2. Interacts with TMEM177 in a COX20-dependent manner. Interacts with COX20. Interacts with COX16. The cofactor is Cu cation.

The protein localises to the mitochondrion inner membrane. It carries out the reaction 4 Fe(II)-[cytochrome c] + O2 + 8 H(+)(in) = 4 Fe(III)-[cytochrome c] + 2 H2O + 4 H(+)(out). Component of the cytochrome c oxidase, the last enzyme in the mitochondrial electron transport chain which drives oxidative phosphorylation. The respiratory chain contains 3 multisubunit complexes succinate dehydrogenase (complex II, CII), ubiquinol-cytochrome c oxidoreductase (cytochrome b-c1 complex, complex III, CIII) and cytochrome c oxidase (complex IV, CIV), that cooperate to transfer electrons derived from NADH and succinate to molecular oxygen, creating an electrochemical gradient over the inner membrane that drives transmembrane transport and the ATP synthase. Cytochrome c oxidase is the component of the respiratory chain that catalyzes the reduction of oxygen to water. Electrons originating from reduced cytochrome c in the intermembrane space (IMS) are transferred via the dinuclear copper A center (CU(A)) of subunit 2 and heme A of subunit 1 to the active site in subunit 1, a binuclear center (BNC) formed by heme A3 and copper B (CU(B)). The BNC reduces molecular oxygen to 2 water molecules using 4 electrons from cytochrome c in the IMS and 4 protons from the mitochondrial matrix. This Galeopterus variegatus (Malayan flying lemur) protein is Cytochrome c oxidase subunit 2 (MT-CO2).